Consider the following 1321-residue polypeptide: Insulin receptor substrate 2 (1321 aa).

Over residues 1–10 the composition is skewed to pro residues; it reads MASAPLPGPP. Disordered regions lie at residues 1–32 and 51–73; these read MASA…HSVR and RGPG…PPRL. In terms of domain architecture, PH spans 16–144; sequence DGPNLNNNNN…WYRALTDLVS (129 aa). Over residues 18–28 the composition is skewed to low complexity; the sequence is PNLNNNNNNNN. One can recognise an IRS-type PTB domain in the interval 191–295; sequence YREVWQVNLK…EAMKALKELF (105 aa). The disordered stretch occupies residues 299 to 536; sequence PRSKSQSSGS…ARDGSGGELY (238 aa). Residues Ser303 and Ser343 each carry the phosphoserine modification. At Thr347 the chain carries Phosphothreonine. Phosphoserine is present on Ser362. Gly residues predominate over residues 364-376; that stretch reads GDGGAAGGAGTAG. Phosphoserine occurs at positions 381, 385, and 388. Position 409 is an omega-N-methylarginine (Arg409). 2 stretches are compositionally biased toward low complexity: residues 435 to 456 and 478 to 490; these read SPPA…SGSY and PSSG…GSPS. Thr517 bears the Phosphothreonine mark. A Phosphoserine modification is found at Ser520. Thr524 is subject to Phosphothreonine. Residue Tyr536 is modified to Phosphotyrosine; by INSR. Residues 536-539 carry the YXXM motif 1 motif; sequence YGYM. A Phosphoserine; by PLK1 modification is found at Ser556. Phosphoserine is present on Ser573. Phosphothreonine occurs at positions 575 and 576. Ser590 carries the phosphoserine modification. A YXXM motif 2 motif is present at residues 594-597; it reads YTLM. 2 positions are modified to phosphoserine: Ser604 and Ser616. Tyr649 bears the Phosphotyrosine mark. 2 short sequence motifs (YXXM motif) span residues 649 to 652 and 671 to 674; these read YMPM. Tyr671 carries the post-translational modification Phosphotyrosine; by INSR. Phosphoserine occurs at positions 675, 678, 727, and 728. The YXXM motif 5 signature appears at 734–737; the sequence is YMRM. At Ser762 the chain carries Phosphoserine. At Thr771 the chain carries Phosphothreonine. The residue at position 796 (Ser796) is a Phosphoserine. Residues 814-817 carry the YXXM motif 6 motif; the sequence is YVLM. At Ser819 the chain carries Phosphoserine. Disordered stretches follow at residues 834–871 and 888–1091; these read ATPG…RPEG and EGLQ…ASPT. Ser907 bears the Phosphoserine mark. Tyr911 bears the Phosphotyrosine; by INSR mark. The segment covering 930-959 has biased composition (low complexity); sequence LLASAASSSSLLSASSPASSLGSGTPGTSS. Ser965 carries the phosphoserine modification. Residue Tyr970 is modified to Phosphotyrosine; by INSR. Residues 1005-1014 show a composition bias toward pro residues; that stretch reads PYPPLPPRPS. The segment covering 1039 to 1055 has biased composition (polar residues); the sequence is AATSQGPTAGSSMSSEP. A YXXM motif 7 motif is present at residues 1061 to 1064; the sequence is YTEM. Phosphothreonine is present on Thr1071. Positions 1072 to 1082 are enriched in pro residues; the sequence is PPQPIVAPPKP. Ser1089 carries the phosphoserine modification. The residue at position 1098 (Ser1098) is a Phosphoserine; by PLK1. A disordered region spans residues 1110–1198; the sequence is LQVSQPPDPH…TSPGQAQPLV (89 aa). A compositionally biased stretch (low complexity) spans 1139–1154; that stretch reads ETFSSTTTVTPVSPSF. Position 1148 is a phosphothreonine (Thr1148). Ser1151, Ser1163, Ser1165, Ser1175, and Ser1190 each carry phosphoserine. A compositionally biased stretch (polar residues) spans 1163–1179; sequence SASVENVSLRKSSEGSS. Tyr1242 is modified (phosphotyrosine; by INSR). Residues 1251-1275 form a disordered region; it reads QGSLAQSQPQPGDKNSWSRTRSLGG. The segment covering 1253 to 1271 has biased composition (polar residues); that stretch reads SLAQSQPQPGDKNSWSRTR. Tyr1303 is subject to Phosphotyrosine; by INSR. Residue Lys1314 forms a Glycyl lysine isopeptide (Lys-Gly) (interchain with G-Cter in ubiquitin) linkage.

As to quaternary structure, interacts with PHIP. Interacts with SH2B1; this interaction enhances leptin-induced activation of the PI3-kinase pathway. Interacts with GRB2. Interacts with PIK3R1. Interacts with DVL2; this interaction promotes the Wnt/beta-catenin signaling pathway. Phosphorylation fluctuates in a cell-cycle dependent manner with hyperphosphorylation during mitosis. Phosphorylated at Ser-556 and Ser-1098 by PLK1; these phosphorylations prevent the activation of the PI3K pathway upon growth factor stimulation by inhibiting the binding between IRS2 and the PI3K pathway components and increasing the level of IRS2 protein degradation. In addition, they prevent premature mitotic exit. Post-translationally, monoubiquitinated by NEDD4; leading to enhanced IGF1 signaling. During cell cycle, ubiquitination and proteasomal degradation are controlled by FZR1. In terms of tissue distribution, skeletal muscle, lung, brain, liver, kidney, heart and spleen.

The protein localises to the cytoplasm. It localises to the cytosol. Its function is as follows. Signaling adapter protein that participates in the signal transduction from two prominent receptor tyrosine kinases, insulin receptor/INSR and insulin-like growth factor I receptor/IGF1R. Plays therefore an important role in development, growth, glucose homeostasis as well as lipid metabolism. Upon phosphorylation by the insulin receptor, functions as a signaling scaffold that propagates insulin action through binding to SH2 domain-containing proteins including the p85 regulatory subunit of PI3K, NCK1, NCK2, GRB2 or SHP2. Recruitment of GRB2 leads to the activation of the guanine nucleotide exchange factor SOS1 which in turn triggers the Ras/Raf/MEK/MAPK signaling cascade. Activation of the PI3K/AKT pathway is responsible for most of insulin metabolic effects in the cell, and the Ras/Raf/MEK/MAPK is involved in the regulation of gene expression and in cooperation with the PI3K pathway regulates cell growth and differentiation. Acts a positive regulator of the Wnt/beta-catenin signaling pathway through suppression of DVL2 autophagy-mediated degradation leading to cell proliferation. Plays a role in cell cycle progression by promoting a robust spindle assembly checkpoint (SAC) during M-phase. In macrophages, IL4-induced tyrosine phosphorylation of IRS2 leads to the recruitment and activation of phosphoinositide 3-kinase (PI3K). The chain is Insulin receptor substrate 2 (Irs2) from Mus musculus (Mouse).